Reading from the N-terminus, the 336-residue chain is Filaggrin (336 aa).

The tract at residues 1-313 (PDGSGRSSNR…GVQGAAASGQ (313 aa)) is disordered. 3 stretches are compositionally biased toward low complexity: residues 16 to 26 (QLSPSQSSDSQ), 40 to 66 (SSSA…LAAD), and 73 to 98 (ARQG…SSSA). Composition is skewed to basic and acidic residues over residues 100 to 120 (RQGR…HSDF), 163 to 176 (DSQH…EQQR), and 184 to 195 (HQHEHEQPESGH). A compositionally biased stretch (low complexity) spans 285 to 311 (AQRGQSSSANRRAGSSSGSGVQGAAAS).

This sequence belongs to the S100-fused protein family. Filaggrin is initially synthesized as a large, insoluble, highly phosphorylated precursor containing many tandem copies of 248 AA, which are not separated by large linker sequences. During terminal differentiation it is dephosphorylated and proteolytically cleaved. In terms of tissue distribution, expressed in the granular layer of the epidermis (at protein level). Expressed in the epidermis of the ear (at protein level).

The protein resides in the cytoplasmic granule. Functionally, aggregates keratin intermediate filaments and promotes disulfide-bond formation among the intermediate filaments during terminal differentiation of mammalian epidermis. This Mus musculus (Mouse) protein is Filaggrin (Flg).